Consider the following 505-residue polypeptide: AMP phosphorylase 2 (505 aa).

AMP is bound by residues Gly-169, Ser-195 to Thr-200, Thr-204, Ser-265, and Lys-289.

Belongs to the thymidine/pyrimidine-nucleoside phosphorylase family. Type 2 subfamily.

It carries out the reaction AMP + phosphate = alpha-D-ribose 1,5-bisphosphate + adenine. The catalysed reaction is CMP + phosphate = cytosine + alpha-D-ribose 1,5-bisphosphate. The enzyme catalyses UMP + phosphate = alpha-D-ribose 1,5-bisphosphate + uracil. Functionally, catalyzes the conversion of AMP and phosphate to adenine and ribose 1,5-bisphosphate (R15P). Exhibits phosphorylase activity toward CMP and UMP in addition to AMP. Functions in an archaeal AMP degradation pathway, together with R15P isomerase and RubisCO. This Archaeoglobus fulgidus (strain ATCC 49558 / DSM 4304 / JCM 9628 / NBRC 100126 / VC-16) protein is AMP phosphorylase 2.